A 202-amino-acid polypeptide reads, in one-letter code: NADH-quinone oxidoreductase subunit B 2 (202 aa).

4 residues coordinate [4Fe-4S] cluster: C38, C39, C104, and C133.

The protein belongs to the complex I 20 kDa subunit family. NDH-1 is composed of 14 different subunits. Subunits NuoB, C, D, E, F, and G constitute the peripheral sector of the complex. [4Fe-4S] cluster is required as a cofactor.

Its subcellular location is the cell inner membrane. It carries out the reaction a quinone + NADH + 5 H(+)(in) = a quinol + NAD(+) + 4 H(+)(out). Functionally, NDH-1 shuttles electrons from NADH, via FMN and iron-sulfur (Fe-S) centers, to quinones in the respiratory chain. The immediate electron acceptor for the enzyme in this species is believed to be ubiquinone. Couples the redox reaction to proton translocation (for every two electrons transferred, four hydrogen ions are translocated across the cytoplasmic membrane), and thus conserves the redox energy in a proton gradient. The polypeptide is NADH-quinone oxidoreductase subunit B 2 (Koribacter versatilis (strain Ellin345)).